Consider the following 426-residue polypeptide: Histidine--tRNA ligase (426 aa).

It belongs to the class-II aminoacyl-tRNA synthetase family.

The protein localises to the cytoplasm. It carries out the reaction tRNA(His) + L-histidine + ATP = L-histidyl-tRNA(His) + AMP + diphosphate + H(+). The sequence is that of Histidine--tRNA ligase (hisS) from Thermoplasma volcanium (strain ATCC 51530 / DSM 4299 / JCM 9571 / NBRC 15438 / GSS1).